A 463-amino-acid chain; its full sequence is V-type proton ATPase subunit S1 (463 aa).

Residues 1-32 (MMAATVVSRIRTGTRWAPVLWLLLSLVAVAAA) form the signal peptide. A propeptide spanning residues 33–225 (VAAEQQVPLV…TAVRPSRVAR (193 aa)) is cleaved from the precursor. Over 33–412 (VAAEQQVPLV…EQFSYASDCA (380 aa)) the chain is Lumenal. 8 N-linked (GlcNAc...) asparagine glycosylation sites follow: Asn164, Asn255, Asn267, Asn290, Asn297, Asn344, Asn351, and Asn399. A helical membrane pass occupies residues 413 to 433 (GFFSPGIWMGLLTTLFMLFIF). Topologically, residues 434–463 (TYGLHMILSLKTMDRFDDRKGPTITLTQIV) are cytoplasmic.

It belongs to the vacuolar ATPase subunit S1 family. As to quaternary structure, accessory component of the multisubunit proton-transporting vacuolar (V)-ATPase protein pump. Interacts (via N-terminus) with ATP6AP2 (via N-terminus). Interacts with RNASEK. Interacts with TMEM106B (via C-terminus). N-glycosylated. As to expression, expressed in brain (at protein level).

The protein resides in the endoplasmic reticulum membrane. It is found in the endoplasmic reticulum-Golgi intermediate compartment membrane. The protein localises to the cytoplasmic vesicle. Its subcellular location is the secretory vesicle. It localises to the synaptic vesicle membrane. The protein resides in the clathrin-coated vesicle membrane. Accessory subunit of the proton-transporting vacuolar (V)-ATPase protein pump, which is required for luminal acidification of secretory vesicles. Guides the V-type ATPase into specialized subcellular compartments, such as neuroendocrine regulated secretory vesicles or the ruffled border of the osteoclast, thereby regulating its activity. Involved in membrane trafficking and Ca(2+)-dependent membrane fusion. May play a role in the assembly of the V-type ATPase complex. In aerobic conditions, involved in intracellular iron homeostasis, thus triggering the activity of Fe(2+) prolyl hydroxylase (PHD) enzymes, and leading to HIF1A hydroxylation and subsequent proteasomal degradation. In islets of Langerhans cells, may regulate the acidification of dense-core secretory granules. This chain is V-type proton ATPase subunit S1 (Atp6ap1), found in Rattus norvegicus (Rat).